A 458-amino-acid polypeptide reads, in one-letter code: GTPase Der (458 aa).

2 consecutive EngA-type G domains span residues 3 to 167 (PVVV…PETE) and 176 to 351 (IKLA…AQYT). GTP is bound by residues 9–16 (GRPNVGKS), 56–60 (DTGGF), 119–122 (NKID), 182–189 (GRPNVGKS), 229–233 (DTAGL), and 294–297 (NKWD). In terms of domain architecture, KH-like spans 352-436 (FNIKTGELNN…PIRLFFREKP (85 aa)).

This sequence belongs to the TRAFAC class TrmE-Era-EngA-EngB-Septin-like GTPase superfamily. EngA (Der) GTPase family. Associates with the 50S ribosomal subunit.

GTPase that plays an essential role in the late steps of ribosome biogenesis. In Desulfosudis oleivorans (strain DSM 6200 / JCM 39069 / Hxd3) (Desulfococcus oleovorans), this protein is GTPase Der.